The following is a 308-amino-acid chain: PAK4-inhibitor inka1 (308 aa).

Positions 81 to 105 (EEEESASDPSAVSSPSSERSLEFDS) are disordered. Residues 87-98 (SDPSAVSSPSSE) show a composition bias toward low complexity. Inka box stretches follow at residues 164–201 (DPEDWTTSLLTRGRNRQPLVLGDNSFADLIHNWMDLPE) and 281–308 (DTDYYQFSALMKSGSRTPIVCNDIIGYI).

This sequence belongs to the INKA family. Interacts with pak4/pak5.

Its subcellular location is the nucleus. It localises to the cytoplasm. Its function is as follows. Inhibitor of the serine/threonine-protein kinase pak4/pak5. Acts by binding pak4/pak5 in a substrate-like manner, inhibiting the protein kinase activity. Required for the proper migration of neural crest cells during embryonic development, probably by inhibiting pak4/pak5. The protein is PAK4-inhibitor inka1 of Danio rerio (Zebrafish).